Consider the following 186-residue polypeptide: Glutathione peroxidase 7 (186 aa).

The first 18 residues, 1–18 (MVAARAAAWLLLAAAACA), serve as a signal peptide directing secretion. The active site involves C56.

This sequence belongs to the glutathione peroxidase family.

It localises to the secreted. It catalyses the reaction 2 glutathione + H2O2 = glutathione disulfide + 2 H2O. The protein is Glutathione peroxidase 7 (GPX7) of Bos taurus (Bovine).